The following is a 976-amino-acid chain: Receptor-like protein 14 (976 aa).

Positions 1-26 (MERKVFSGQNLIWVMLLLVQLRGYKC) are cleaved as a signal peptide. Residues 27–928 (CIEKERKALL…DDDDEAAIDM (902 aa)) are Extracellular-facing. Asparagine 60, asparagine 75, asparagine 98, asparagine 112, asparagine 151, asparagine 185, and asparagine 200 each carry an N-linked (GlcNAc...) asparagine glycan. LRR repeat units follow at residues 105–127 (FEEL…LFDD), 137–160 (LRNL…FLNA), 162–185 (TSLT…ELKN), 186–209 (LTKL…FTHL), 210–233 (EKLK…ELKV), 234–258 (LTNL…VFCE), 260–283 (KNLR…LGNL), 284–306 (NKLR…SFNS), 308–331 (ESLE…PLAN), 333–358 (TKLK…WLPK), 359–381 (FQLT…LVYQ), 382–405 (TNLR…LLEN), 407–428 (PELK…PTIV), 429–452 (HKLQ…IGHV), 454–477 (PRLL…MGEM), 478–501 (NDIS…LLTG), and 503–528 (FSLI…RLTS). Asparagine 331 is a glycosylation site (N-linked (GlcNAc...) asparagine). A glycan (N-linked (GlcNAc...) asparagine) is linked at asparagine 416. 2 N-linked (GlcNAc...) asparagine glycosylation sites follow: asparagine 460 and asparagine 489. Residues 530-549 (IVLRMHNNLFTGEIGVGLRT) form an LRR 18; degenerate repeat. 11 LRR repeats span residues 550 to 573 (LVNL…SIPP), 575 to 599 (SSHL…LLAI), 600 to 623 (HHLN…VVNS), 625 to 645 (YGIK…VTLL), 646 to 669 (ENAY…VNTG), 671 to 692 (MITL…LCDL), 693 to 715 (TSIR…CLNH), 782 to 805 (LDYM…ELGD), 806 to 829 (LSKL…NFSK), 831 to 854 (KDIE…LTNL), and 856 to 879 (SLAV…QFNT). The N-linked (GlcNAc...) asparagine glycan is linked to asparagine 552. Asparagine 633 carries an N-linked (GlcNAc...) asparagine glycan. N-linked (GlcNAc...) asparagine glycosylation is present at asparagine 680. 5 N-linked (GlcNAc...) asparagine glycosylation sites follow: asparagine 813, asparagine 826, asparagine 853, asparagine 861, and asparagine 866. The disordered stretch occupies residues 897-922 (DRSCEGKKNTKEADNGGEEEEEDDDD). Positions 898–910 (RSCEGKKNTKEAD) are enriched in basic and acidic residues. Positions 911 to 922 (NGGEEEEEDDDD) are enriched in acidic residues. The helical transmembrane segment at 929–949 (VVLYWTTGSTYAIALIGILVL) threads the bilayer. Residues 950–976 (MCFDCPWRRTWLCIVDAFIASGKSMFS) lie on the Cytoplasmic side of the membrane.

It belongs to the RLP family.

The protein localises to the cell membrane. The chain is Receptor-like protein 14 from Arabidopsis thaliana (Mouse-ear cress).